The primary structure comprises 362 residues: uncharacterized protein (362 aa).

A compositionally biased stretch (basic and acidic residues) spans 314–323 (GEEKEPKQES). A disordered region spans residues 314–362 (GEEKEPKQESQEQLFNPFTIDEMLTEEQQQQQEEENNATEEEGDTVKLG). Over residues 345–356 (QEEENNATEEEG) the composition is skewed to acidic residues.

This is an uncharacterized protein from Acidianus two-tailed virus (ATV).